The following is a 339-amino-acid chain: Catalase-related peroxidase (339 aa).

A signal peptide spans 1 to 31 (MIRIRNRWFRWLAIALASLVASIGIATVGFA). His58 is a catalytic residue. Tyr328 is a heme binding site.

This sequence belongs to the catalase family. The cofactor is heme.

It is found in the periplasm. Functionally, has an organic peroxide-dependent peroxidase activity. This chain is Catalase-related peroxidase (srpA), found in Synechococcus elongatus (strain ATCC 33912 / PCC 7942 / FACHB-805) (Anacystis nidulans R2).